We begin with the raw amino-acid sequence, 28 residues long: TVSENVVKKVEDVMPIATGHEREXLXAQ.

It belongs to the cytochrome c oxidase subunit 5B family. Component of the cytochrome c oxidase (complex IV, CIV), a multisubunit enzyme composed of a catalytic core of 3 subunits and several supernumerary subunits. The complex exists as a monomer or a dimer and forms supercomplexes (SCs) in the inner mitochondrial membrane with ubiquinol-cytochrome c oxidoreductase (cytochrome b-c1 complex, complex III, CIII).

It localises to the mitochondrion inner membrane. The protein operates within energy metabolism; oxidative phosphorylation. In terms of biological role, component of the cytochrome c oxidase, the last enzyme in the mitochondrial electron transport chain which drives oxidative phosphorylation. The respiratory chain contains 3 multisubunit complexes succinate dehydrogenase (complex II, CII), ubiquinol-cytochrome c oxidoreductase (cytochrome b-c1 complex, complex III, CIII) and cytochrome c oxidase (complex IV, CIV), that cooperate to transfer electrons derived from NADH and succinate to molecular oxygen, creating an electrochemical gradient over the inner membrane that drives transmembrane transport and the ATP synthase. Cytochrome c oxidase is the component of the respiratory chain that catalyzes the reduction of oxygen to water. Electrons originating from reduced cytochrome c in the intermembrane space (IMS) are transferred via the dinuclear copper A center (CU(A)) of subunit 2 and heme A of subunit 1 to the active site in subunit 1, a binuclear center (BNC) formed by heme A3 and copper B (CU(B)). The BNC reduces molecular oxygen to 2 water molecules using 4 electrons from cytochrome c in the IMS and 4 protons from the mitochondrial matrix. This chain is Cytochrome c oxidase subunit 5B, mitochondrial, found in Solanum tuberosum (Potato).